The sequence spans 738 residues: Protein ALEX (738 aa).

6 disordered regions span residues 1 to 105, 155 to 188, 237 to 350, 387 to 516, 528 to 578, and 611 to 689; these read MSPS…EEAM, REDY…ASHA, TTFP…LPKP, MSGQ…LGQP, GEPG…LDPP, and GMRL…RPRI. Polar residues predominate over residues 257–273; that stretch reads GSTTTPLSIWTAPQSQV. The span at 279–301 shows a compositional bias: basic and acidic residues; sequence KSREPQLRASTQRDPHLSDKQPR. Residues 387 to 396 are compositionally biased toward polar residues; sequence MSGQNQTEGQ. 3 stretches are compositionally biased toward pro residues: residues 410 to 438, 448 to 467, and 476 to 485; these read QPPP…PPSQ, PSLP…PRQP, and PGQPPSPLRS. 3 stretches are compositionally biased toward low complexity: residues 542–564, 615–626, and 656–671; these read PSLP…LPAG, RPASARSSPPAM, and ATRS…EAAS.

This sequence belongs to the ALEX family. As to quaternary structure, interacts with the N-terminal region of the XLas isoforms of guanine nucleotide-binding protein G(s) subunit alpha.

The protein resides in the cell membrane. It localises to the cell projection. The protein localises to the ruffle. Functionally, may inhibit the adenylyl cyclase-stimulating activity of guanine nucleotide-binding protein G(s) subunit alpha which is produced from the same locus in a different open reading frame. The polypeptide is Protein ALEX (Rattus norvegicus (Rat)).